The chain runs to 201 residues: Natural cytotoxicity triggering receptor 3 (201 aa).

The N-terminal stretch at 1 to 18 is a signal peptide; sequence MAWMLLLILIMVHPGSCA. The Ig-like domain occupies 19-126; that stretch reads LWVSQPPEIR…VGTGNGTRLV (108 aa). Residues 19-135 lie on the Extracellular side of the membrane; the sequence is LWVSQPPEIR…VVEKEHPQLG (117 aa). Cys39 and Cys108 form a disulfide bridge. Asn42 and Asn121 each carry an N-linked (GlcNAc...) asparagine glycan. The helical transmembrane segment at 136–156 threads the bilayer; sequence AGTVLLLRAGFYAVSFLSVAV. At 157 to 201 the chain is on the cytoplasmic side; sequence GSTVYYQGKCLTWKGPRRQLPAVVPAPLPPPCGSSAHLLPPVPGG.

The protein belongs to the natural cytotoxicity receptor (NCR) family. As to quaternary structure, homodimer in the unliganted form. Interacts with CD3Z. Interacts with and is activated by binding to NCR3LG1. Interacts with and is activated by binding to BAG6. Interacts with and is inhibited by binding to LGALS3. In terms of tissue distribution, selectively expressed by all resting and activated NK cells and weakly expressed in spleen.

It is found in the cell membrane. Its function is as follows. Cell membrane receptor of natural killer/NK cells that is activated by binding of extracellular ligands including BAG6 and NCR3LG1. Stimulates NK cells cytotoxicity toward neighboring cells producing these ligands. It controls, for instance, NK cells cytotoxicity against tumor cells. Engagement of NCR3 by BAG6 also promotes myeloid dendritic cells (DC) maturation, both through killing DCs that did not acquire a mature phenotype, and inducing the release by NK cells of TNFA and IFNG which promote DC maturation. In Homo sapiens (Human), this protein is Natural cytotoxicity triggering receptor 3.